A 722-amino-acid chain; its full sequence is Neprilysin-1 (722 aa).

The signal sequence occupies residues Met-1–Ala-17. The Peptidase M13 domain maps to Val-32 to Trp-722. Intrachain disulfides connect Cys-33-Cys-38, Cys-56-Cys-707, Cys-64-Cys-667, Cys-120-Cys-378, and Cys-589-Cys-719. N-linked (GlcNAc...) asparagine glycans are attached at residues Asn-100, Asn-184, Asn-207, and Asn-424. Residue His-552 participates in Zn(2+) binding. Glu-553 is an active-site residue. A Zn(2+)-binding site is contributed by His-556. Asn-609 carries N-linked (GlcNAc...) asparagine glycosylation. Zn(2+) is bound at residue Glu-614. Catalysis depends on Asp-618, which acts as the Proton donor.

The protein belongs to the peptidase M13 family. The cofactor is Zn(2+). In terms of processing, contains 5 disulfide bonds. In terms of tissue distribution, expressed by the venom gland.

It localises to the secreted. The protein is Neprilysin-1 of Trittame loki (Brush-footed trapdoor spider).